The sequence spans 231 residues: Ribose-5-phosphate isomerase A (231 aa).

Substrate-binding positions include 31-34 (TGST), 86-89 (DGAD), and 100-103 (KGLG). The active-site Proton acceptor is the E109. K127 serves as a coordination point for substrate.

This sequence belongs to the ribose 5-phosphate isomerase family. As to quaternary structure, homodimer.

It catalyses the reaction aldehydo-D-ribose 5-phosphate = D-ribulose 5-phosphate. It functions in the pathway carbohydrate degradation; pentose phosphate pathway; D-ribose 5-phosphate from D-ribulose 5-phosphate (non-oxidative stage): step 1/1. Its function is as follows. Catalyzes the reversible conversion of ribose-5-phosphate to ribulose 5-phosphate. The protein is Ribose-5-phosphate isomerase A of Gluconobacter oxydans (strain 621H) (Gluconobacter suboxydans).